The sequence spans 197 residues: FMN-dependent NADH:quinone oxidoreductase (197 aa).

S10 is a binding site for FMN.

It belongs to the azoreductase type 1 family. Homodimer. Requires FMN as cofactor.

The catalysed reaction is 2 a quinone + NADH + H(+) = 2 a 1,4-benzosemiquinone + NAD(+). The enzyme catalyses N,N-dimethyl-1,4-phenylenediamine + anthranilate + 2 NAD(+) = 2-(4-dimethylaminophenyl)diazenylbenzoate + 2 NADH + 2 H(+). Functionally, quinone reductase that provides resistance to thiol-specific stress caused by electrophilic quinones. Its function is as follows. Also exhibits azoreductase activity. Catalyzes the reductive cleavage of the azo bond in aromatic azo compounds to the corresponding amines. This is FMN-dependent NADH:quinone oxidoreductase from Mycoplasma pneumoniae (strain ATCC 29342 / M129 / Subtype 1) (Mycoplasmoides pneumoniae).